Here is a 336-residue protein sequence, read N- to C-terminus: Aspartate--ammonia ligase (336 aa).

The protein belongs to the class-II aminoacyl-tRNA synthetase family. AsnA subfamily.

Its subcellular location is the cytoplasm. It catalyses the reaction L-aspartate + NH4(+) + ATP = L-asparagine + AMP + diphosphate + H(+). It functions in the pathway amino-acid biosynthesis; L-asparagine biosynthesis; L-asparagine from L-aspartate (ammonia route): step 1/1. The sequence is that of Aspartate--ammonia ligase from Lactobacillus johnsonii (strain CNCM I-12250 / La1 / NCC 533).